The primary structure comprises 352 residues: S-adenosylmethionine:tRNA ribosyltransferase-isomerase (352 aa).

It belongs to the QueA family. Monomer.

It is found in the cytoplasm. The catalysed reaction is 7-aminomethyl-7-carbaguanosine(34) in tRNA + S-adenosyl-L-methionine = epoxyqueuosine(34) in tRNA + adenine + L-methionine + 2 H(+). It participates in tRNA modification; tRNA-queuosine biosynthesis. Transfers and isomerizes the ribose moiety from AdoMet to the 7-aminomethyl group of 7-deazaguanine (preQ1-tRNA) to give epoxyqueuosine (oQ-tRNA). This Syntrophomonas wolfei subsp. wolfei (strain DSM 2245B / Goettingen) protein is S-adenosylmethionine:tRNA ribosyltransferase-isomerase.